The primary structure comprises 609 residues: MSQAQIDEIFALLDSAAKVLIDQGVLPADWQNNSQITRSKSPEHGDYASNIALTAAKAAKSNPRALAEQLTAALPANDSIAKLEIAGPGFINIFLNTDAKFAVLDAIFAKNQKYGLTDEFANKKIQVEFVSANPTSSLHVGHGRGAAFGMSVANLLEAVGYEVTREYYVNDAGRQMDILATSTYLRYLQLNGEQIHFPVGGYQGDYVTDIAQTIKTQQNDAYVHSYADISANAPEDEVSEVNDAGEKEVVSGDKNAHIDVIIANSKQALGDNYAVFLNAALSEILGDIKDDLNEFGVRFERWFSEKSIADEIEPVLAELDSKGHLYEKDGNIWFRSTDFGDEKDRVVRRANGLTTYFASDIAYHKNKFERGFDTVINVWGADHHGYIARVRAALTALGIDEKRLEVILVQFVALWRGEEKIQMSSRSGKFVTLRELREEVGNDAARFYYVARKPEVHIDFDLELAKSQSKDNAVYYIQYAHARVCSVLEKLAAKGFDVDDAQGSAQQHLLTADAESELIKLLAAYPATLKRAATGYDPHVLTNYLKDLASLFHAWYNDNRILPVSIIADETPSQEELDMMQARLRLSKAVRQVLANGLSLLGLSAPTSM.

The 'HIGH' region signature appears at 132–142 (ANPTSSLHVGH).

Belongs to the class-I aminoacyl-tRNA synthetase family. Monomer.

It is found in the cytoplasm. It carries out the reaction tRNA(Arg) + L-arginine + ATP = L-arginyl-tRNA(Arg) + AMP + diphosphate. The chain is Arginine--tRNA ligase from Psychrobacter sp. (strain PRwf-1).